A 382-amino-acid polypeptide reads, in one-letter code: V-type proton ATPase subunit C 1 (382 aa).

An N-acetylthreonine modification is found at threonine 2.

It belongs to the V-ATPase C subunit family. As to quaternary structure, V-ATPase is a heteromultimeric enzyme made up of two complexes: the ATP-hydrolytic V1 complex and the proton translocation V0 complex. The V1 complex consists of three catalytic AB heterodimers that form a heterohexamer, three peripheral stalks each consisting of EG heterodimers, one central rotor including subunits D and F, and the regulatory subunits C and H. The proton translocation complex V0 consists of the proton transport subunit a, a ring of proteolipid subunits c9c'', rotary subunit d, subunits e and f, and the accessory subunits ATP6AP1/Ac45 and ATP6AP2/PRR. Ubiquitous. Abundant in brain, liver, kidney and testis.

It is found in the cytoplasmic vesicle. The protein localises to the secretory vesicle. Its subcellular location is the synaptic vesicle membrane. It localises to the clathrin-coated vesicle membrane. Functionally, subunit of the V1 complex of vacuolar(H+)-ATPase (V-ATPase), a multisubunit enzyme composed of a peripheral complex (V1) that hydrolyzes ATP and a membrane integral complex (V0) that translocates protons. V-ATPase is responsible for acidifying and maintaining the pH of intracellular compartments and in some cell types, is targeted to the plasma membrane, where it is responsible for acidifying the extracellular environment. Subunit C is necessary for the assembly of the catalytic sector of the enzyme and is likely to have a specific function in its catalytic activity. This chain is V-type proton ATPase subunit C 1 (Atp6v1c1), found in Mus musculus (Mouse).